The chain runs to 232 residues: MTKHGKRIRGIQETYDLAKSYSLGEAIDILKQCPTVRFDQTVDVSVKLGIDPRKSDQQVRGSVSLPHGTGKVLRILVFAAGDKAAEAIEAGADFVGSDDLVEKIKGGWVDFDVAVATPDMMREVGKLGKVLGPRNLMPTPKAGTVTTDVVKTIAELRKGKIEFKADRAGVCNVGVAKLSFDSAQIKENVEALCAALVKAKPATAKGQYLVNFTISSTMGPGVTVDTRELIAL.

Belongs to the universal ribosomal protein uL1 family. Part of the 50S ribosomal subunit.

In terms of biological role, binds directly to 23S rRNA. The L1 stalk is quite mobile in the ribosome, and is involved in E site tRNA release. Its function is as follows. Protein L1 is also a translational repressor protein, it controls the translation of the L11 operon by binding to its mRNA. This Chlamydia trachomatis serovar L2b (strain UCH-1/proctitis) protein is Large ribosomal subunit protein uL1.